The primary structure comprises 130 residues: Small ribosomal subunit protein uS9 (130 aa).

The protein belongs to the universal ribosomal protein uS9 family.

The chain is Small ribosomal subunit protein uS9 from Lawsonia intracellularis (strain PHE/MN1-00).